Here is a 205-residue protein sequence, read N- to C-terminus: MDYWILLVLAFLVADKSWHLTGLLATKLTSPERLQQLIRERQELHQQQQSLSAQDHYAKWTKNNRRLDVLDRDIARVRKNYLESVEATKARLAKLKLLVVTVPFTALKFYKGKLPVYALPKGMFPRFIEGTLEHGWLYMALAPLNMKQFSEGASVAVSLGIWLFALLRVLGAIEFVLETLREQNPQVATETAKVHARTAQAASAN.

Residues 1–3 (MDY) lie on the Lumenal side of the membrane. Residues 4–24 (WILLVLAFLVADKSWHLTGLL) traverse the membrane as a helical segment. Residues 25–96 (ATKLTSPERL…ATKARLAKLK (72 aa)) lie on the Cytoplasmic side of the membrane. A coiled-coil region spans residues 32 to 96 (ERLQQLIRER…ATKARLAKLK (65 aa)). Residues 97–117 (LLVVTVPFTALKFYKGKLPVY) form a helical membrane-spanning segment. Over 118 to 156 (ALPKGMFPRFIEGTLEHGWLYMALAPLNMKQFSEGASVA) the chain is Lumenal. Residues 157–173 (VSLGIWLFALLRVLGAI) traverse the membrane as a helical segment. Topologically, residues 174-205 (EFVLETLREQNPQVATETAKVHARTAQAASAN) are cytoplasmic.

The protein belongs to the WRB/GET1 family. Component of the Golgi to ER traffic (GET) complex, which is composed of GET1, GET2 and GET3. Within the complex, GET1 and GET2 form a heterotetramer which is stabilized by phosphatidylinositol binding and which binds to the GET3 homodimer.

It localises to the endoplasmic reticulum membrane. It is found in the golgi apparatus membrane. In terms of biological role, required for the post-translational delivery of tail-anchored (TA) proteins to the endoplasmic reticulum. Together with GET2, acts as a membrane receptor for soluble GET3, which recognizes and selectively binds the transmembrane domain of TA proteins in the cytosol. The GET complex cooperates with the HDEL receptor ERD2 to mediate the ATP-dependent retrieval of resident ER proteins that contain a C-terminal H-D-E-L retention signal from the Golgi to the ER. The sequence is that of Golgi to ER traffic protein 1 from Eremothecium gossypii (strain ATCC 10895 / CBS 109.51 / FGSC 9923 / NRRL Y-1056) (Yeast).